The following is a 320-amino-acid chain: Cytochrome f (320 aa).

The N-terminal stretch at 1–35 (MQTRKTFSWIKEQINRSISVSLMIYIITRPSISIA) is a signal peptide. Heme is bound by residues Tyr-36, Cys-56, Cys-59, and His-60. Residues 286–306 (VQGLLFFLASVILAQIFLVLK) traverse the membrane as a helical segment.

This sequence belongs to the cytochrome f family. The 4 large subunits of the cytochrome b6-f complex are cytochrome b6, subunit IV (17 kDa polypeptide, petD), cytochrome f and the Rieske protein, while the 4 small subunits are PetG, PetL, PetM and PetN. The complex functions as a dimer. Heme is required as a cofactor.

It localises to the plastid. It is found in the chloroplast thylakoid membrane. In terms of biological role, component of the cytochrome b6-f complex, which mediates electron transfer between photosystem II (PSII) and photosystem I (PSI), cyclic electron flow around PSI, and state transitions. This is Cytochrome f from Daucus carota (Wild carrot).